An 806-amino-acid chain; its full sequence is Mitogen-activated protein kinase 7 (806 aa).

The segment at 1 to 23 (MAEPLKEEDGEDGSGEPPGRVKA) is disordered. Ala-2 is modified (N-acetylalanine). The required for cytoplasmic targeting stretch occupies residues 2–77 (AEPLKEEDGE…VVSSARRRLT (76 aa)). In terms of domain architecture, Protein kinase spans 55–347 (YEIIETIGNG…AAAALRHPFL (293 aa)). ATP contacts are provided by residues 61–69 (IGNGAYGVV) and Lys-84. The tract at residues 78 to 139 (GQQVAIKKIP…FRSVYVVLDL (62 aa)) is required for binding to MAP2K5. The necessary for oligomerization stretch occupies residues 140-406 (MESDLHQIIH…QQIRFQPSLQ (267 aa)). Residue Asp-182 is the Proton acceptor of the active site. Residues 219–221 (TEY) carry the TXY motif. The interval 407-806 (PVASEPVCPD…LSDLPDLQEP (400 aa)) is may not be required for kinase activity; required to stimulate MEF2C activity. Disordered stretches follow at residues 424-473 (APSG…AISD) and 488-727 (RSRL…PKGS). Pro residues predominate over residues 433 to 443 (SPPPALPPCSD). Composition is skewed to basic and acidic residues over residues 502-519 (PEPR…EREE), 527-544 (RAKE…KERG), and 563-573 (DNDRSLLERWT). The short motif at 505–539 (RKPVTAQERQREREEKRRRRQERAKEREKRRQERE) is the Nuclear localization signal element. Over residues 578–592 (PPAPAPAPAPAPAPA) the composition is skewed to pro residues. The segment covering 593–603 (PSSAQPTSTPT) has biased composition (low complexity). A compositionally biased stretch (pro residues) spans 627-643 (VCPPPGPVPQPAGPIPA). The segment covering 647 to 660 (TAPSTSLLASQSLV) has biased composition (polar residues). Residues 678–689 (PSGPPPPDPGLT) show a composition bias toward pro residues. The segment covering 693–710 (STSESPDVNLVTQQLSKS) has biased composition (polar residues). Ser-710 carries the post-translational modification Phosphoserine. Thr-723 carries the post-translational modification Phosphothreonine.

This sequence belongs to the protein kinase superfamily. CMGC Ser/Thr protein kinase family. MAP kinase subfamily. Interacts with MAP2K5. Forms oligomers. Interacts with MEF2A, MEF2C and MEF2D; the interaction phosphorylates the MEF2s and enhances transcriptional activity of MEF2A, MEF2C but not MEF2D. Interacts with SGK1. Interacts with PML. Interacts (via N-terminal half) with HSP90AB1-CDC37 chaperone complex in resting cells; the interaction is MAP2K5-independent and prevents MAPK7 from ubiquitination and proteasomal degradation. Interacts with STUB1/CHIP; the interaction is enhanced in the presence of IGF1 or MAP2K5 and promotes STUB1/CHIP E3 ligase activity. Requires Mg(2+) as cofactor. Dually phosphorylated on Thr-219 and Tyr-221, which activates the enzyme. As to expression, detected in testis, brain, kidney, lung and heart. Detected in total embryo (at protein level).

The protein resides in the cytoplasm. The protein localises to the nucleus. It localises to the PML body. It catalyses the reaction L-seryl-[protein] + ATP = O-phospho-L-seryl-[protein] + ADP + H(+). The catalysed reaction is L-threonyl-[protein] + ATP = O-phospho-L-threonyl-[protein] + ADP + H(+). Activated by tyrosine and threonine phosphorylation. Activated in response to hyperosmolarity, hydrogen peroxide, and epidermal growth factor (EGF). Plays a role in various cellular processes such as proliferation, differentiation and cell survival. The upstream activator of MAPK7 is the MAPK kinase MAP2K5. Upon activation, it translocates to the nucleus and phosphorylates various downstream targets including MEF2C. EGF activates MAPK7 through a Ras-independent and MAP2K5-dependent pathway. As part of the MAPK/ERK signaling pathway, acts as a negative regulator of apoptosis in cardiomyocytes via interaction with STUB1/CHIP and promotion of STUB1-mediated ubiquitination and degradation of ICER-type isoforms of CREM. May have a role in muscle cell differentiation. May be important for endothelial function and maintenance of blood vessel integrity. MAP2K5 and MAPK7 interact specifically with one another and not with MEK1/ERK1 or MEK2/ERK2 pathways. Phosphorylates SGK1 at Ser-78 and this is required for growth factor-induced cell cycle progression. Involved in the regulation of p53/TP53 by disrupting the PML-MDM2 interaction. The polypeptide is Mitogen-activated protein kinase 7 (Mapk7) (Mus musculus (Mouse)).